Reading from the N-terminus, the 588-residue chain is Secreted triacylglycerol lipase LIP1 (588 aa).

A signal peptide spans 1–20 (MRFSGFVSGLGLGLLTAVSA). Ser258 (acyl-ester intermediate) is an active-site residue. Asn400 carries N-linked (GlcNAc...) asparagine glycosylation.

It belongs to the type-B carboxylesterase/lipase family.

The protein localises to the secreted. It carries out the reaction a triacylglycerol + H2O = a diacylglycerol + a fatty acid + H(+). Functionally, secreted acylglycerol lipase required for efficient utilization of saturated triglyceride lipids. Is not involved in virulence. The chain is Secreted triacylglycerol lipase LIP1 from Gibberella zeae (strain ATCC MYA-4620 / CBS 123657 / FGSC 9075 / NRRL 31084 / PH-1) (Wheat head blight fungus).